Here is a 313-residue protein sequence, read N- to C-terminus: Porphobilinogen deaminase (313 aa).

The residue at position 242 (C242) is an S-(dipyrrolylmethanemethyl)cysteine.

It belongs to the HMBS family. In terms of assembly, monomer. Dipyrromethane is required as a cofactor.

It carries out the reaction 4 porphobilinogen + H2O = hydroxymethylbilane + 4 NH4(+). It functions in the pathway porphyrin-containing compound metabolism; protoporphyrin-IX biosynthesis; coproporphyrinogen-III from 5-aminolevulinate: step 2/4. Tetrapolymerization of the monopyrrole PBG into the hydroxymethylbilane pre-uroporphyrinogen in several discrete steps. The polypeptide is Porphobilinogen deaminase (Escherichia fergusonii (strain ATCC 35469 / DSM 13698 / CCUG 18766 / IAM 14443 / JCM 21226 / LMG 7866 / NBRC 102419 / NCTC 12128 / CDC 0568-73)).